The primary structure comprises 481 residues: UDP-N-acetylmuramoyl-L-alanyl-D-glutamate--L-lysine ligase (481 aa).

Ser42 provides a ligand contact to UDP-N-acetyl-alpha-D-muramoyl-L-alanyl-D-glutamate. 118–124 (GTKGKTT) is a binding site for ATP. UDP-N-acetyl-alpha-D-muramoyl-L-alanyl-D-glutamate contacts are provided by residues Gln158, 160 to 161 (TT), Ser187, and Arg195. At Lys229 the chain carries N6-carboxylysine. The short motif at 404–407 (DDPN) is the L-lysine recognition motif element.

This sequence belongs to the MurCDEF family. MurE subfamily. Post-translationally, carboxylation is probably crucial for Mg(2+) binding and, consequently, for the gamma-phosphate positioning of ATP.

The protein localises to the cytoplasm. The catalysed reaction is UDP-N-acetyl-alpha-D-muramoyl-L-alanyl-D-glutamate + L-lysine + ATP = UDP-N-acetyl-alpha-D-muramoyl-L-alanyl-gamma-D-glutamyl-L-lysine + ADP + phosphate + H(+). Its pathway is cell wall biogenesis; peptidoglycan biosynthesis. Its function is as follows. Catalyzes the addition of L-lysine to the nucleotide precursor UDP-N-acetylmuramoyl-L-alanyl-D-glutamate (UMAG) in the biosynthesis of bacterial cell-wall peptidoglycan. The sequence is that of UDP-N-acetylmuramoyl-L-alanyl-D-glutamate--L-lysine ligase from Streptococcus pyogenes serotype M18 (strain MGAS8232).